Reading from the N-terminus, the 404-residue chain is Serine palmitoyltransferase (404 aa).

Residues 112–113 (GY), Ser185, His213, and Thr241 contribute to the pyridoxal 5'-phosphate site. At Lys244 the chain carries N6-(pyridoxal phosphate)lysine.

The protein belongs to the class-II pyridoxal-phosphate-dependent aminotransferase family. It depends on pyridoxal 5'-phosphate as a cofactor.

The protein localises to the cytoplasm. The enzyme catalyses L-serine + hexadecanoyl-CoA + H(+) = 3-oxosphinganine + CO2 + CoA. It functions in the pathway lipid metabolism; sphingolipid metabolism. In terms of biological role, involved in de novo bacterial ceramide synthesis. Catalyzes the condensation of L-serine with palmitoyl-CoA (hexadecanoyl-CoA) to produce 3-oxosphinganine. Can also condense serine and C16:1-CoA, but shows a preference for palmitoyl-CoA. This Caulobacter vibrioides (strain NA1000 / CB15N) (Caulobacter crescentus) protein is Serine palmitoyltransferase.